We begin with the raw amino-acid sequence, 447 residues long: Monocarboxylate transporter 11 (447 aa).

Residues 1–11 (MTPKPAGPPDG) lie on the Cytoplasmic side of the membrane. 12 helical membrane-spanning segments follow: residues 12–32 (GWGW…YGLL), 54–74 (AWVS…GSAL), 80–100 (ARPV…FSAF), 107–127 (LYLG…APAL), 139–159 (VLAV…LAPA), 162–182 (FLLD…VTLH), 219–239 (AFSV…VPYV), 249–269 (GMGG…DACA), 288–308 (LVVF…VPTV), 330–350 (GSYA…GGVV), 354–374 (GLVM…SGFL), and 383–403 (ASFL…MGLP). Residues 404 to 447 (RALPSCRPASPPATPPPERGELLPVPQVSLLSAGGTGSIRDTTC) lie on the Cytoplasmic side of the membrane.

This sequence belongs to the major facilitator superfamily. Monocarboxylate porter (TC 2.A.1.13) family. In terms of assembly, interacts with isoform 2 of BSG.

It localises to the endoplasmic reticulum membrane. The protein localises to the cell membrane. The catalysed reaction is pyruvate(out) + H(+)(out) = pyruvate(in) + H(+)(in). Proton-linked monocarboxylate transporter. It catalyzes the transport of pyruvate across the plasma membrane. Probably involved in hepatic lipid metabolism: overexpression results in an increase of triacylglycerol(TAG) levels, small increases in intracellular diacylglycerols and decreases in lysophosphatidylcholine, cholesterol ester and sphingomyelin lipids. The polypeptide is Monocarboxylate transporter 11 (Slc16a11) (Mus musculus (Mouse)).